Here is a 255-residue protein sequence, read N- to C-terminus: Enolase-phosphatase E1 (255 aa).

Mg(2+) contacts are provided by Asp22 and Glu24. Substrate is bound by residues 136-137 (SS) and Lys173. Asp199 is a Mg(2+) binding site.

This sequence belongs to the HAD-like hydrolase superfamily. MasA/MtnC family. As to quaternary structure, monomer. It depends on Mg(2+) as a cofactor.

Its subcellular location is the cytoplasm. The protein localises to the nucleus. It carries out the reaction 5-methylsulfanyl-2,3-dioxopentyl phosphate + H2O = 1,2-dihydroxy-5-(methylsulfanyl)pent-1-en-3-one + phosphate. Its pathway is amino-acid biosynthesis; L-methionine biosynthesis via salvage pathway; L-methionine from S-methyl-5-thio-alpha-D-ribose 1-phosphate: step 3/6. The protein operates within amino-acid biosynthesis; L-methionine biosynthesis via salvage pathway; L-methionine from S-methyl-5-thio-alpha-D-ribose 1-phosphate: step 4/6. In terms of biological role, bifunctional enzyme that catalyzes the enolization of 2,3-diketo-5-methylthiopentyl-1-phosphate (DK-MTP-1-P) into the intermediate 2-hydroxy-3-keto-5-methylthiopentenyl-1-phosphate (HK-MTPenyl-1-P), which is then dephosphorylated to form the acireductone 1,2-dihydroxy-3-keto-5-methylthiopentene (DHK-MTPene). This chain is Enolase-phosphatase E1, found in Verticillium alfalfae (strain VaMs.102 / ATCC MYA-4576 / FGSC 10136) (Verticillium wilt of alfalfa).